The following is a 1199-amino-acid chain: DNA-directed RNA polymerase subunit beta' (1199 aa).

Positions 60, 62, 75, and 78 each coordinate Zn(2+). Mg(2+)-binding residues include aspartate 449, aspartate 451, and aspartate 453. Zn(2+) contacts are provided by cysteine 818, cysteine 892, cysteine 899, and cysteine 902.

Belongs to the RNA polymerase beta' chain family. In terms of assembly, the RNAP catalytic core consists of 2 alpha, 1 beta, 1 beta' and 1 omega subunit. When a sigma factor is associated with the core the holoenzyme is formed, which can initiate transcription. It depends on Mg(2+) as a cofactor. Zn(2+) is required as a cofactor.

It catalyses the reaction RNA(n) + a ribonucleoside 5'-triphosphate = RNA(n+1) + diphosphate. In terms of biological role, DNA-dependent RNA polymerase catalyzes the transcription of DNA into RNA using the four ribonucleoside triphosphates as substrates. In Bacillus pumilus (strain SAFR-032), this protein is DNA-directed RNA polymerase subunit beta'.